We begin with the raw amino-acid sequence, 365 residues long: Heterogeneous nuclear ribonucleoproteins A1 homolog (365 aa).

The tract at residues 4–94 is globular A domain; sequence SEAPNEPEQL…EPKRAVSRED (91 aa). RRM domains are found at residues 14 to 97 and 105 to 184; these read RKLF…DSSR and KKIF…LSKQ. The segment at 95–185 is globular B domain; that stretch reads SSRPGAHLTV…QVRKALSKQE (91 aa). Disordered regions lie at residues 175–208 and 328–365; these read SQVRKALSKQEMASVSGSQRERGGSGNYGSRGGF and GPMKGGNYGGGRNSGPYGGGYGGGSASSSSGYGGGRRF. Composition is skewed to gly residues over residues 198–208 and 330–365; these read GSGNYGSRGGF and MKGGNYGGGRNSGPYGGGYGGGSASSSSGYGGGRRF. Residues 321-359 form a nuclear targeting sequence region; the sequence is SQSSSNFGPMKGGNYGGGRNSGPYGGGYGGGSASSSSGY.

The protein resides in the nucleus. It localises to the cytoplasm. This protein is a component of ribonucleosomes. The protein is Heterogeneous nuclear ribonucleoproteins A1 homolog (hnrnpa1) of Xenopus laevis (African clawed frog).